A 194-amino-acid polypeptide reads, in one-letter code: Methyl-CpG-binding domain protein 3-like 1 (194 aa).

The transcription repressor stretch occupies residues 1 to 104; the sequence is MAKSSQRKQR…KLVPSYTGGS (104 aa).

Belongs to the MBD3L family. In terms of tissue distribution, highly expressed in testis. Detected at low levels in pancreas. Not detected in the other tissues tested.

The protein resides in the nucleus. Transcriptional repressor. The polypeptide is Methyl-CpG-binding domain protein 3-like 1 (MBD3L1) (Homo sapiens (Human)).